The primary structure comprises 46 residues: KSCCPSTTARNIYNTCRLTGASRSVCASLSGCKIISGSTCDSGWNH.

3 disulfide bridges follow: Cys-3–Cys-40, Cys-4–Cys-32, and Cys-16–Cys-26.

This sequence belongs to the plant thionin (TC 1.C.44) family.

Its subcellular location is the secreted. Thionins are small plant proteins which are toxic to animal cells. They seem to exert their toxic effect at the level of the cell membrane. Their precise function is not known. The chain is Ligatoxin-B from Phoradendron liga (Argentine mistletoe).